A 318-amino-acid polypeptide reads, in one-letter code: Geranylfarnesyl diphosphate synthase (318 aa).

Residues Lys31, Arg34, and His65 each coordinate isopentenyl diphosphate. Positions 72 and 76 each coordinate Mg(2+). Residue Arg81 participates in an all-trans-polyprenyl diphosphate binding. Isopentenyl diphosphate is bound at residue Arg82. An all-trans-polyprenyl diphosphate contacts are provided by Lys166, Thr167, and Gln204.

Belongs to the FPP/GGPP synthase family. As to quaternary structure, homodimer. Requires Mg(2+) as cofactor.

It carries out the reaction isopentenyl diphosphate + (2E,6E,10E)-geranylgeranyl diphosphate = (2E,6E,10E,14E)-geranylfarnesyl diphosphate + diphosphate. Functionally, probably involved in biosynthesis of the precursor for C25 (sesterterpanyl chain) moiety of C25-C25 diether (2,3-di-O-sesterterpanyl-sn-glycero) membrane lipid. Catalyzes the condensation of isopentenyl pyrophosphate with the allylic pyrophosphates to yield all-trans geranylfarnesyl diphosphate (GFPP). Geranylgeranyl diphosphate (GGPP) is the preferred substrate, however methylallyl diphosphate (DMAPP), farnesyl diphosphate (FPP) and geranyl diphosphate (GPP) can also be used as allylic substrate. In Aeropyrum pernix, this protein is Geranylfarnesyl diphosphate synthase (fgs).